The primary structure comprises 270 residues: Type III pantothenate kinase (270 aa).

6–13 lines the ATP pocket; sequence DVRNTHTV. Residue 109 to 112 participates in substrate binding; it reads GADR. Catalysis depends on aspartate 111, which acts as the Proton acceptor. Aspartate 131 provides a ligand contact to K(+). Residue serine 134 participates in ATP binding. Threonine 186 is a binding site for substrate.

The protein belongs to the type III pantothenate kinase family. Homodimer. Requires NH4(+) as cofactor. K(+) is required as a cofactor.

The protein resides in the cytoplasm. The catalysed reaction is (R)-pantothenate + ATP = (R)-4'-phosphopantothenate + ADP + H(+). It functions in the pathway cofactor biosynthesis; coenzyme A biosynthesis; CoA from (R)-pantothenate: step 1/5. Its function is as follows. Catalyzes the phosphorylation of pantothenate (Pan), the first step in CoA biosynthesis. The chain is Type III pantothenate kinase from Mycolicibacterium gilvum (strain PYR-GCK) (Mycobacterium gilvum (strain PYR-GCK)).